We begin with the raw amino-acid sequence, 101 residues long: Small ribosomal subunit protein uS14 (101 aa).

Residues 1 to 23 (MAKKSSVEKNKRRRKMVAQQAPK) form a disordered region.

Belongs to the universal ribosomal protein uS14 family. Part of the 30S ribosomal subunit. Contacts proteins S3 and S10.

Binds 16S rRNA, required for the assembly of 30S particles and may also be responsible for determining the conformation of the 16S rRNA at the A site. In Rhodospirillum centenum (strain ATCC 51521 / SW), this protein is Small ribosomal subunit protein uS14.